We begin with the raw amino-acid sequence, 76 residues long: uncharacterized protein (76 aa).

A run of 2 helical transmembrane segments spans residues A9–V29 and L45–Y65.

It is found in the cell membrane. This is an uncharacterized protein from Bacillus subtilis (strain 168).